The chain runs to 322 residues: Transaldolase (322 aa).

The active-site Schiff-base intermediate with substrate is the Lys136.

It belongs to the transaldolase family. Type 1 subfamily. As to quaternary structure, homodimer.

The protein localises to the cytoplasm. It catalyses the reaction D-sedoheptulose 7-phosphate + D-glyceraldehyde 3-phosphate = D-erythrose 4-phosphate + beta-D-fructose 6-phosphate. Its pathway is carbohydrate degradation; pentose phosphate pathway; D-glyceraldehyde 3-phosphate and beta-D-fructose 6-phosphate from D-ribose 5-phosphate and D-xylulose 5-phosphate (non-oxidative stage): step 2/3. Transaldolase is important for the balance of metabolites in the pentose-phosphate pathway. The chain is Transaldolase from Xanthomonas oryzae pv. oryzae (strain MAFF 311018).